A 405-amino-acid chain; its full sequence is Acetate kinase (405 aa).

Residue N7 coordinates Mg(2+). Residue K14 coordinates ATP. R92 contacts substrate. Residue D149 is the Proton donor/acceptor of the active site. Residues 209 to 213 (HLGNG) and 284 to 286 (DMR) each bind ATP. E389 provides a ligand contact to Mg(2+).

Belongs to the acetokinase family. As to quaternary structure, homodimer. Requires Mg(2+) as cofactor. Mn(2+) serves as cofactor.

Its subcellular location is the cytoplasm. It catalyses the reaction acetate + ATP = acetyl phosphate + ADP. It functions in the pathway metabolic intermediate biosynthesis; acetyl-CoA biosynthesis; acetyl-CoA from acetate: step 1/2. Its function is as follows. Catalyzes the formation of acetyl phosphate from acetate and ATP. Can also catalyze the reverse reaction. The sequence is that of Acetate kinase from Borrelia garinii subsp. bavariensis (strain ATCC BAA-2496 / DSM 23469 / PBi) (Borreliella bavariensis).